Reading from the N-terminus, the 532-residue chain is CTP synthase (532 aa).

Residues 1-267 (MTKYIFVTGG…DDIVLEHLQL (267 aa)) form an amidoligase domain region. A CTP-binding site is contributed by serine 13. Serine 13 lines the UTP pocket. Residue 14–19 (SIGKGI) coordinates ATP. Tyrosine 54 contacts L-glutamine. Residue aspartate 71 participates in ATP binding. The Mg(2+) site is built by aspartate 71 and glutamate 141. CTP contacts are provided by residues 148 to 150 (DIE), 188 to 193 (KTKPTQ), and lysine 224. Residues 188-193 (KTKPTQ) and lysine 224 each bind UTP. Residues 292–532 (RIGLVGKYVS…DFVGAALNNK (241 aa)) form the Glutamine amidotransferase type-1 domain. Glycine 354 serves as a coordination point for L-glutamine. The active-site Nucleophile; for glutamine hydrolysis is the cysteine 381. L-glutamine-binding positions include 382-385 (LGMQ), glutamate 405, and arginine 462. Catalysis depends on residues histidine 507 and glutamate 509.

The protein belongs to the CTP synthase family. As to quaternary structure, homotetramer.

It catalyses the reaction UTP + L-glutamine + ATP + H2O = CTP + L-glutamate + ADP + phosphate + 2 H(+). The catalysed reaction is L-glutamine + H2O = L-glutamate + NH4(+). The enzyme catalyses UTP + NH4(+) + ATP = CTP + ADP + phosphate + 2 H(+). It functions in the pathway pyrimidine metabolism; CTP biosynthesis via de novo pathway; CTP from UDP: step 2/2. Its activity is regulated as follows. Allosterically activated by GTP, when glutamine is the substrate; GTP has no effect on the reaction when ammonia is the substrate. The allosteric effector GTP functions by stabilizing the protein conformation that binds the tetrahedral intermediate(s) formed during glutamine hydrolysis. Inhibited by the product CTP, via allosteric rather than competitive inhibition. Catalyzes the ATP-dependent amination of UTP to CTP with either L-glutamine or ammonia as the source of nitrogen. Regulates intracellular CTP levels through interactions with the four ribonucleotide triphosphates. The chain is CTP synthase from Listeria monocytogenes serotype 4b (strain F2365).